A 240-amino-acid polypeptide reads, in one-letter code: MORN repeat-containing protein 3 (240 aa).

Positions 6-35 (CPKKSESLWKGWDRKAQKNGLRRQVYAVNG) are interaction with MDM2. 7 MORN repeats span residues 38–60 (YVGE…KNGA), 62–84 (YEGD…DQQT), 91–113 (YSGW…PKEY), 114–136 (YEGE…NGDI), 137–159 (YEGQ…NGNR), 160–182 (YEGC…DHGQ), and 184–205 (FEGF…GRDE). The tract at residues 76-100 (TLSLPDQQTGKCRRVYSGWWKGDKK) is interaction with SIRT1. The segment at 206 to 240 (APEPTQFPIPEVKILDPDGVLAQALAMFKKTEEGD) is interaction with TP53.

Interacts with MEIG1. Interacts with TP53, MDM2 and SIRT1; the interactions mediate post-transcriptional modifications of TP53 by MDM2 and SIRT1.

It is found in the cytoplasmic vesicle. Its subcellular location is the secretory vesicle. It localises to the acrosome. Functionally, assembles a suppression complex (suppresome) by tethering SIRT1 and MDM2 to regulate composite modifications of p53/TP53. Confers both deacetylation-mediated functional inactivation, by SIRT1, and ubiquitination-dependent degradation, by MDM2, of p53/TP53, promoting a proliferative and cell survival behaviors. May play a role in the regulation of spermatogenesis. The chain is MORN repeat-containing protein 3 (MORN3) from Macaca fascicularis (Crab-eating macaque).